The following is an 808-amino-acid chain: Phospholipase D alpha 1 (808 aa).

Positions 1-125 (MAKTLLHGTL…LEGEEVDKWV (125 aa)) constitute a C2 domain. Residue Asp186 coordinates Ca(2+). The region spanning 326-364 (TIFTHHQKIVVVDSEMPTSGSENRRVVSFVGGIDLCDGR) is the PLD phosphodiesterase 1 domain. Active-site residues include His331, Lys333, and Asp338. His331 is an a 1,2-diacyl-sn-glycero-3-phosphate binding site. Positions 370 and 404 each coordinate Ca(2+). In terms of domain architecture, PLD phosphodiesterase 2 spans 654–681 (FMIYVHAKMMIVDDEYIIIGSANINQRS). Active-site residues include His659, Lys661, and Asp666. An a 1,2-diacyl-sn-glycero-3-phosphate-binding site is contributed by His659. Glu720 provides a ligand contact to Ca(2+).

Belongs to the phospholipase D family. C2-PLD subfamily. Ca(2+) is required as a cofactor.

It catalyses the reaction a 1,2-diacyl-sn-glycero-3-phosphocholine + H2O = a 1,2-diacyl-sn-glycero-3-phosphate + choline + H(+). In terms of biological role, hydrolyzes glycerol-phospholipids at the terminal phosphodiesteric bond. Plays an important role in various cellular processes. This chain is Phospholipase D alpha 1 (PLD1), found in Spuriopimpinella brachycarpa (Chamnamul).